The following is a 396-amino-acid chain: Flavohemoprotein (396 aa).

The 136-residue stretch at 1 to 136 (MLDNHTIAIV…LANVFIQRED (136 aa)) folds into the Globin domain. A heme b-binding site is contributed by histidine 85. Active-site charge relay system residues include tyrosine 95 and glutamate 135. Residues 147 to 396 (GGWSGVRPFR…YECFGPHKVV (250 aa)) are reductase. The region spanning 150–255 (SGVRPFRIVN…AAPHGDFFLD (106 aa)) is the FAD-binding FR-type domain. FAD is bound by residues tyrosine 188 and 204–207 (RQYS). Position 268-273 (268-273 (GVGQTP)) interacts with NADP(+). 389–392 (CFGP) contacts FAD.

Belongs to the globin family. Two-domain flavohemoproteins subfamily. This sequence in the C-terminal section; belongs to the flavoprotein pyridine nucleotide cytochrome reductase family. Heme b is required as a cofactor. FAD serves as cofactor.

It carries out the reaction 2 nitric oxide + NADPH + 2 O2 = 2 nitrate + NADP(+) + H(+). It catalyses the reaction 2 nitric oxide + NADH + 2 O2 = 2 nitrate + NAD(+) + H(+). Its function is as follows. Is involved in NO detoxification in an aerobic process, termed nitric oxide dioxygenase (NOD) reaction that utilizes O(2) and NAD(P)H to convert NO to nitrate, which protects the bacterium from various noxious nitrogen compounds. Therefore, plays a central role in the inducible response to nitrosative stress. The polypeptide is Flavohemoprotein (Pectobacterium atrosepticum (strain SCRI 1043 / ATCC BAA-672) (Erwinia carotovora subsp. atroseptica)).